We begin with the raw amino-acid sequence, 479 residues long: Serine carboxypeptidase-like 29 (479 aa).

Residues 1–28 form the signal peptide; sequence MAKTRGSCCLVNALIAIAFLATAHLCEA. Residues Asn47 and Asn144 are each glycosylated (N-linked (GlcNAc...) asparagine). Disulfide bonds link Cys93–Cys349, Cys254–Cys266, and Cys290–Cys317. Residue Ser186 is part of the active site. N-linked (GlcNAc...) asparagine glycosylation occurs at Asn293. Active-site residues include Asp386 and His438.

The protein belongs to the peptidase S10 family. As to expression, expressed in seedlings, roots, leaves and flowers.

It is found in the secreted. In terms of biological role, probable carboxypeptidase. The sequence is that of Serine carboxypeptidase-like 29 (SCPL29) from Arabidopsis thaliana (Mouse-ear cress).